Consider the following 179-residue polypeptide: Inner membrane-spanning protein YciB (179 aa).

The next 5 membrane-spanning stretches (helical) occupy residues 22–42, 50–70, 76–96, 121–141, and 149–169; these read IYAATTALIVATAIVLIYTWI, MALITFVLVAVFGGLTVFFHN, WKVTVIYGLFAGALLFSQWVM, IAWAVFFILCGLANIYIAFWM, and FKVFGLTALTLIFTLLSGVYI.

This sequence belongs to the YciB family.

The protein localises to the cell inner membrane. Its function is as follows. Plays a role in cell envelope biogenesis, maintenance of cell envelope integrity and membrane homeostasis. The chain is Inner membrane-spanning protein YciB from Enterobacter sp. (strain 638).